Reading from the N-terminus, the 164-residue chain is Choriogonadotropin subunit beta (164 aa).

A signal peptide spans 1-20; it reads MEMLQGLLLCLLLSTGGAWA. Intrachain disulfides connect C29/C77, C43/C92, C46/C130, C54/C108, C58/C110, and C113/C120. The N-linked (GlcNAc...) asparagine glycan is linked to N50. A disordered region spans residues 135–164; that stretch reads FQDSSSKDPPRNLTSPSQLLEPADPPLVPQ. Residue S140 is glycosylated (O-linked (GalNAc...) serine). N-linked (GlcNAc...) asparagine glycosylation occurs at N146. A glycan (O-linked (GalNAc...) serine) is linked at S151.

The protein belongs to the glycoprotein hormones subunit beta family. Heterodimer of a common alpha chain and a unique beta chain which confers biological specificity to thyrotropin, lutropin, follitropin and gonadotropin. In terms of tissue distribution, placenta.

Its subcellular location is the secreted. Its function is as follows. Stimulates the ovaries to synthesize the steroids that are essential for the maintenance of pregnancy. The chain is Choriogonadotropin subunit beta (CGB) from Callithrix jacchus (White-tufted-ear marmoset).